The chain runs to 181 residues: Oligoribonuclease (181 aa).

Residues 8–171 (LIWIDLEMTG…DDIRESIAEL (164 aa)) form the Exonuclease domain. Residue Tyr129 is part of the active site.

Belongs to the oligoribonuclease family.

Its subcellular location is the cytoplasm. 3'-to-5' exoribonuclease specific for small oligoribonucleotides. In Alcanivorax borkumensis (strain ATCC 700651 / DSM 11573 / NCIMB 13689 / SK2), this protein is Oligoribonuclease.